Reading from the N-terminus, the 670-residue chain is DNA ligase (670 aa).

NAD(+) contacts are provided by residues D33–D37, S82–L83, and E114. The active-site N6-AMP-lysine intermediate is K116. Positions 137, 174, 291, and 315 each coordinate NAD(+). Residues C409, C412, C427, and C433 each coordinate Zn(2+). The region spanning D593 to S670 is the BRCT domain.

The protein belongs to the NAD-dependent DNA ligase family. LigA subfamily. The cofactor is Mg(2+). Requires Mn(2+) as cofactor.

It catalyses the reaction NAD(+) + (deoxyribonucleotide)n-3'-hydroxyl + 5'-phospho-(deoxyribonucleotide)m = (deoxyribonucleotide)n+m + AMP + beta-nicotinamide D-nucleotide.. Its function is as follows. DNA ligase that catalyzes the formation of phosphodiester linkages between 5'-phosphoryl and 3'-hydroxyl groups in double-stranded DNA using NAD as a coenzyme and as the energy source for the reaction. It is essential for DNA replication and repair of damaged DNA. In Vibrio atlanticus (strain LGP32) (Vibrio splendidus (strain Mel32)), this protein is DNA ligase.